Consider the following 47-residue polypeptide: MKKITGIILLLLAAIILAACQANYIRDVQGGTVSPSSSAELTGLATQ.

An N-terminal signal peptide occupies residues 1–19 (MKKITGIILLLLAAIILAA). Residue Cys-20 is the site of N-palmitoyl cysteine attachment. The S-diacylglycerol cysteine moiety is linked to residue Cys-20.

Its subcellular location is the cell outer membrane. Functionally, lysis proteins are required for both colicin release and partial cell lysis. This chain is Lysis protein for colicin E9 (lys), found in Escherichia coli.